A 199-amino-acid polypeptide reads, in one-letter code: Protein GrpE (199 aa).

The protein belongs to the GrpE family. Homodimer.

Its subcellular location is the cytoplasm. Functionally, participates actively in the response to hyperosmotic and heat shock by preventing the aggregation of stress-denatured proteins, in association with DnaK and GrpE. It is the nucleotide exchange factor for DnaK and may function as a thermosensor. Unfolded proteins bind initially to DnaJ; upon interaction with the DnaJ-bound protein, DnaK hydrolyzes its bound ATP, resulting in the formation of a stable complex. GrpE releases ADP from DnaK; ATP binding to DnaK triggers the release of the substrate protein, thus completing the reaction cycle. Several rounds of ATP-dependent interactions between DnaJ, DnaK and GrpE are required for fully efficient folding. This chain is Protein GrpE, found in Fusobacterium nucleatum subsp. nucleatum (strain ATCC 25586 / DSM 15643 / BCRC 10681 / CIP 101130 / JCM 8532 / KCTC 2640 / LMG 13131 / VPI 4355).